A 423-amino-acid chain; its full sequence is Dihydroorotase (423 aa).

H56 and H58 together coordinate Zn(2+). Substrate-binding positions include 58-60 (HFR) and N89. Residues K137, H168, H227, and D302 each contribute to the Zn(2+) site. An N6-carboxylysine modification is found at K137. Residue D302 is part of the active site. Position 306 (H306) interacts with substrate.

Belongs to the metallo-dependent hydrolases superfamily. DHOase family. Class I DHOase subfamily. Zn(2+) serves as cofactor.

It carries out the reaction (S)-dihydroorotate + H2O = N-carbamoyl-L-aspartate + H(+). Its pathway is pyrimidine metabolism; UMP biosynthesis via de novo pathway; (S)-dihydroorotate from bicarbonate: step 3/3. In terms of biological role, catalyzes the reversible cyclization of carbamoyl aspartate to dihydroorotate. This Methanocaldococcus jannaschii (strain ATCC 43067 / DSM 2661 / JAL-1 / JCM 10045 / NBRC 100440) (Methanococcus jannaschii) protein is Dihydroorotase.